Reading from the N-terminus, the 132-residue chain is Profilin (132 aa).

This sequence belongs to the profilin family. Occurs in many kinds of cells as a complex with monomeric actin in a 1:1 ratio.

Its subcellular location is the cytoplasm. The protein localises to the cytoskeleton. Functionally, binds to actin and affects the structure of the cytoskeleton. At high concentrations, profilin prevents the polymerization of actin, whereas it enhances it at low concentrations. By binding to PIP2, it inhibits the formation of IP3 and DG. The sequence is that of Profilin from Naegleria pringsheimi (Amoeba).